Here is a 379-residue protein sequence, read N- to C-terminus: Transcription factor bHLH122 (379 aa).

Residues 1–17 show a composition bias toward basic and acidic residues; it reads MESEFQQHHFLLHDHQH. A disordered region spans residues 1–21; that stretch reads MESEFQQHHFLLHDHQHQRPR. Ser-74 carries the phosphoserine modification. Disordered stretches follow at residues 79–98, 133–156, and 190–286; these read TFNSDGTEKKPPEVKTEDED, SVSRNKRPREKDDRTPVNNLARHN, and TSNT…MSLP. Residues 84–93 show a composition bias toward basic and acidic residues; that stretch reads GTEKKPPEVK. The span at 190-200 shows a compositional bias: polar residues; it reads TSNTEASSLTP. A phosphoserine mark is found at Ser-213 and Ser-234. A compositionally biased stretch (polar residues) spans 235-261; it reads GGFNRSFGNEGSASSKLTALARTQSGG. A compositionally biased stretch (basic and acidic residues) spans 265 to 274; the sequence is YKTKDEDSAS. The bHLH domain maps to 310–360; the sequence is CATHPRSIAERVRRTKISERMRKLQDLVPNMDTQTNTADMLDLAVQYIKDL.

As to quaternary structure, homodimer.

It is found in the nucleus. The polypeptide is Transcription factor bHLH122 (BHLH122) (Arabidopsis thaliana (Mouse-ear cress)).